Reading from the N-terminus, the 756-residue chain is Putative beta-xylosidase (756 aa).

A signal peptide spans 1 to 18 (MKKLLFTFLVSTGTIFFS). A lipid anchor (N-palmitoyl cysteine) is attached at cysteine 19. Cysteine 19 carries S-diacylglycerol cysteine lipidation.

Belongs to the glycosyl hydrolase 3 family.

It localises to the cell outer membrane. Functionally, glycoside hydrolase probably involved in ulvan degradation. Ulvan is the main polysaccharide component of the Ulvales (green seaweed) cell wall. It is composed of disaccharide building blocks comprising 3-sulfated rhamnose (Rha3S) linked to D-glucuronic acid (GlcA), L-iduronic acid (IduA), or D-xylose (Xyl). This is Putative beta-xylosidase from Formosa agariphila (strain DSM 15362 / KCTC 12365 / LMG 23005 / KMM 3901 / M-2Alg 35-1).